The chain runs to 151 residues: Ribosome maturation factor RimP (151 aa).

It belongs to the RimP family.

The protein resides in the cytoplasm. Functionally, required for maturation of 30S ribosomal subunits. The polypeptide is Ribosome maturation factor RimP (Shewanella piezotolerans (strain WP3 / JCM 13877)).